We begin with the raw amino-acid sequence, 77 residues long: Large ribosomal subunit protein bL28 (77 aa).

The protein belongs to the bacterial ribosomal protein bL28 family.

This Albidiferax ferrireducens (strain ATCC BAA-621 / DSM 15236 / T118) (Rhodoferax ferrireducens) protein is Large ribosomal subunit protein bL28.